The chain runs to 476 residues: MPMSLRLHNNLTRRVEPFAPLDPSSPTLYVCGPTVYNYAHIGNARGPVVFDVLAALLRRRYGALRYARNITDVDDKINAAAQAQGVPISTITDRFAAIYRQDMAALGVVPPDIEPEATAHIPQIVAMIEQLIATGHAYAAEGHVLFSVSSFEDYGKLSRRDPDEMLAGARVDVAPYKRDPGDFVLWKPSSDDLPGWPSPWGRGRPGWHIECSAMAAAHLGPTIDIHAGGVDLQFPHHENEIAQSECAHGGATFARFWLHNGMLNFSGAKMSKSLGNIETVHELIARHPPEALRYALLSAHYRQPLDWSDGLIEQAKNTLDRLYGTLRDLAALEAESGSDLAVSMTIPAEVESALDDDLNTPLALSVMASIASDARALRSDLMQSGQASARMIELHAARAKLLGAGMALGLLQQDPAAWFSRGTDAGDDARITALVEERSAAKKAKDFARADAIRKQLAEEGIVLEDTPQGVRWKRA.

Residue Cys31 participates in Zn(2+) binding. The short motif at 33-43 is the 'HIGH' region element; it reads PTVYNYAHIGN. Cys211, His236, and Glu240 together coordinate Zn(2+). The short motif at 269–273 is the 'KMSKS' region element; it reads KMSKS. Lys272 is a binding site for ATP.

It belongs to the class-I aminoacyl-tRNA synthetase family. As to quaternary structure, monomer. The cofactor is Zn(2+).

It localises to the cytoplasm. It carries out the reaction tRNA(Cys) + L-cysteine + ATP = L-cysteinyl-tRNA(Cys) + AMP + diphosphate. The protein is Cysteine--tRNA ligase of Xanthomonas euvesicatoria pv. vesicatoria (strain 85-10) (Xanthomonas campestris pv. vesicatoria).